A 631-amino-acid polypeptide reads, in one-letter code: VPS9 domain-containing protein 1 (631 aa).

Phosphoserine is present on Ser116. A coiled-coil region spans residues 187 to 221 (RQMMENLVIAKAREETLQRKMEERRLRLQEAANRR). The interval 318–379 (PNPGSRRLRP…ASGLPDKDSS (62 aa)) is disordered. Pro residues predominate over residues 337 to 362 (PPEPSAAPRPQDSPPTPPLQPGPVGS). The region spanning 467–630 (RAREAALSRS…VELLPRGGLA (164 aa)) is the VPS9 domain.

As to expression, ubiquitous.

In Homo sapiens (Human), this protein is VPS9 domain-containing protein 1 (VPS9D1).